A 1014-amino-acid polypeptide reads, in one-letter code: Resistance to glucose repression protein 1 (1014 aa).

The segment at 1 to 63 is disordered; the sequence is MSTNLANYFA…AVQAKNDDDF (63 aa). Ser2 is subject to N-acetylserine. Basic and acidic residues predominate over residues 11–34; it reads GKKDIENEHVNRNASHESNSKSDV. Residue Thr73 is modified to Phosphothreonine. A Phosphoserine modification is found at Ser75. Disordered stretches follow at residues 90 to 144 and 236 to 270; these read LGRS…YLIP and SEGN…KNSK. Positions 104 to 115 are enriched in low complexity; it reads YDNSSNNSSSNS. 2 positions are modified to phosphoserine: Ser242 and Ser254. Over residues 247–260 the composition is skewed to basic and acidic residues; sequence DLERGYGSDDENSK. The Nuclear localization signal motif lies at 277–283; that stretch reads KPILKKR. Ser311 is modified (phosphoserine). The disordered stretch occupies residues 340 to 463; it reads YPKESNSSVS…SEKSNKPTKN (124 aa). Composition is skewed to polar residues over residues 343–352, 361–370, 389–407, and 415–455; these read ESNSSVSLKS, STIPNPVGEN, HVQN…LENS, and LDQN…NPSE. Ser421 is modified (phosphoserine). Tyr480 carries the post-translational modification Phosphotyrosine. The residue at position 490 (Ser490) is a Phosphoserine. 2 disordered regions span residues 531-557 and 570-591; these read EHLN…DEEH and SDSG…TTSR. Residues Ser570, Ser572, and Ser576 each carry the phosphoserine modification. Residues 578-591 show a composition bias toward polar residues; sequence ITDNSSVASSTTSR. Residues 595–599 carry the Nuclear localization signal motif; sequence RPIIK. Ser610, Ser614, and Ser680 each carry phosphoserine. A disordered region spans residues 690 to 897; sequence SKEKHVPQLH…QSFRIVNNTP (208 aa). Over residues 722 to 740 the composition is skewed to low complexity; the sequence is YSSSSDSEQQFIEDSQYNS. Over residues 741–758 the composition is skewed to acidic residues; that stretch reads SDDEEEEDDDDQEVDDNH. 2 stretches are compositionally biased toward polar residues: residues 770–802 and 822–833; these read LGKS…NFTG and RNSSSGNFIFNS. The short motif at 873-879 is the Nuclear localization signal element; sequence KKKALPK. Over residues 884–897 the composition is skewed to polar residues; the sequence is SDSSQSFRIVNNTP. Thr896 carries the post-translational modification Phosphothreonine. Phosphoserine is present on Ser898. The span at 959-972 shows a compositional bias: basic and acidic residues; that stretch reads KKVDSVQTTRKEAS. Positions 959 to 982 are disordered; sequence KKVDSVQTTRKEASLTDSSNESLH. Ser980 bears the Phosphoserine mark.

As to quaternary structure, interacts with SAK1.

The protein localises to the nucleus. Functionally, involved in RNA processing and negative regulation of glucose repression. Regulates the level of two antigens, P43 and P70. Binds to protein phosphatase type 1. Functions with REG2 and SNF1 protein kinase to regulate growth. Might regulate SNF1 directly or indirectly. This chain is Resistance to glucose repression protein 1 (REG1), found in Saccharomyces cerevisiae (strain ATCC 204508 / S288c) (Baker's yeast).